The chain runs to 883 residues: Phosphoenolpyruvate carboxylase (883 aa).

Residues His-141 and Lys-547 contribute to the active site.

The protein belongs to the PEPCase type 1 family. Mg(2+) is required as a cofactor.

The catalysed reaction is oxaloacetate + phosphate = phosphoenolpyruvate + hydrogencarbonate. Its function is as follows. Forms oxaloacetate, a four-carbon dicarboxylic acid source for the tricarboxylic acid cycle. This Chromohalobacter salexigens (strain ATCC BAA-138 / DSM 3043 / CIP 106854 / NCIMB 13768 / 1H11) protein is Phosphoenolpyruvate carboxylase.